The following is a 1691-amino-acid chain: ADAMTS-like protein 3 (1691 aa).

Positions 1-26 (MASWTSPWWVLIGMVFMHSPLPQTTA) are cleaved as a signal peptide. Residues 75–124 (DGNWDAWGDWSDCSRTCGGGASYSLRRCLTGRNCEGQNIRYKTCSNHDCP) form the TSP type-1 1 domain. 3 disulfides stabilise this stretch: cysteine 87-cysteine 118, cysteine 91-cysteine 123, and cysteine 102-cysteine 108. Asparagine 293 carries an N-linked (GlcNAc...) asparagine glycan. TSP type-1 domains lie at 418–468 (PLPR…APKP), 478–535 (DCPK…IPCY), and 564–626 (EEPT…EACD). 3 disulfide bridges follow: cysteine 576/cysteine 620, cysteine 580/cysteine 625, and cysteine 591/cysteine 609. Asparagine 681 is a glycosylation site (N-linked (GlcNAc...) asparagine). TSP type-1 domains are found at residues 703 to 760 (CPPR…FDCP), 763 to 818 (WHIE…ARTD), and 819 to 881 (CPPH…PECS). Asparagine 797 carries an N-linked (GlcNAc...) asparagine glycan. 3 disulfide bridges follow: cysteine 831/cysteine 875, cysteine 835/cysteine 880, and cysteine 846/cysteine 863. Residues 896 to 992 (PQILSVQRVY…IAGSAQETVV (97 aa)) enclose the Ig-like C2-type 1 domain. 2 N-linked (GlcNAc...) asparagine glycosylation sites follow: asparagine 915 and asparagine 927. Cysteine 934 and cysteine 982 are disulfide-bonded. Asparagine 1102 is a glycosylation site (N-linked (GlcNAc...) asparagine). Residues 1146-1184 (PPAAQLRGETGSVSQSSHAKNSGKLTFKPKGPVLMRQSQ) are disordered. Positions 1156–1169 (GSVSQSSHAKNSGK) are enriched in polar residues. Residues 1185–1279 (PPSISFNKTI…GSDVESSSVL (95 aa)) enclose the Ig-like C2-type 2 domain. N-linked (GlcNAc...) asparagine glycosylation occurs at asparagine 1191. Cysteines 1215 and 1263 form a disulfide. Residues asparagine 1292, asparagine 1316, asparagine 1330, asparagine 1343, asparagine 1349, asparagine 1356, asparagine 1432, asparagine 1516, asparagine 1574, and asparagine 1591 are each glycosylated (N-linked (GlcNAc...) asparagine). The 83-residue stretch at 1296 to 1378 (PEHNHLSVVV…ATNALGKAVA (83 aa)) folds into the Ig-like C2-type 3 domain. A disulfide bridge links cysteine 1321 with cysteine 1367. 2 TSP type-1 domains span residues 1424 to 1482 (QEPF…NIRD) and 1483 to 1545 (CPAR…HPCV). Residues 1597–1644 (CDVCWHTGPWKPCTAACGRGFQSRKVDCIHTRSCKPVAKRHCVQKKKP) enclose the TSP type-1 10 domain. The PLAC domain occupies 1655 to 1691 (CDRDCTDTTHYCMFVKHLNLCSLDRYKQRCCQSCQEG).

Post-translationally, glycosylated. Can be O-fucosylated by POFUT2 on a serine or a threonine residue found within the consensus sequence C1-X(2)-(S/T)-C2-G of the TSP type-1 repeat domains where C1 and C2 are the first and second cysteine residue of the repeat, respectively. Fucosylated repeats can then be further glycosylated by the addition of a beta-1,3-glucose residue by the glucosyltransferase, B3GALTL. Fucosylation mediates the efficient secretion of ADAMTS family members. Can also be C-glycosylated with one or two mannose molecules on tryptophan residues within the consensus sequence W-X-X-W of the TPRs, and N-glycosylated. These other glycosylations can also facilitate secretion. In terms of tissue distribution, expressed in epithelial cells of the colon, fallopian tube, skin, breast, prostate, epididymis, liver, pancreatic islets and bile ducts, as well as by vascular endothelial cells, smooth muscle cells, fibroblasts, cortical and ganglionic neurons and cardiac myocytes. Also expressed by malignant epithelial cells in colon cancer, as well as breast, prostate, renal and skin tumors. Expression is significantly reduced in colon cancer compared to normal colon.

Its subcellular location is the secreted. It is found in the extracellular space. The protein resides in the extracellular matrix. The protein is ADAMTS-like protein 3 (ADAMTSL3) of Homo sapiens (Human).